The chain runs to 309 residues: Taste receptor type 2 member 31 (309 aa).

Residues 1–2 lie on the Extracellular side of the membrane; sequence MI. A helical membrane pass occupies residues 3-23; the sequence is TFLPTIFSILVVVIFVIGNFG. The Cytoplasmic segment spans residues 24 to 55; sequence NGFIALVNSIEWVKRQKISFADQILTALAVSR. Residues 56–76 traverse the membrane as a helical segment; that stretch reads VGLLWALLLNWYSTVFNPAFY. At 77 to 100 the chain is on the extracellular side; the sequence is SVGVRTTVYDVWTVTGHFSNWLAT. Residues 101–121 form a helical membrane-spanning segment; the sequence is SLSIFYLLKIANFSNLIFLHL. Residues 122 to 126 lie on the Cytoplasmic side of the membrane; the sequence is KRRVK. Residues 127 to 147 traverse the membrane as a helical segment; sequence SVILVMLLGPLLFLACQLFVI. The Extracellular segment spans residues 148–181; the sequence is NMKEILRTKEYEGNMTWKIKLRSAMYLSDATITT. Asparagine 161 is a glycosylation site (N-linked (GlcNAc...) asparagine). A helical transmembrane segment spans residues 182-202; that stretch reads LANLVPFTLTLLSFLLLICSL. The Cytoplasmic segment spans residues 203-229; that stretch reads CKHLNKMQLHGKGSQDPSTKVHIKVLQ. A helical transmembrane segment spans residues 230–250; that stretch reads TVISFLLLCAIYFLSIMISVW. Topologically, residues 251–259 are extracellular; it reads SFGSLENKP. Residues 260 to 280 form a helical membrane-spanning segment; it reads VFMFCKAIRFSYPSIHPFILI. Residues 281 to 309 lie on the Cytoplasmic side of the membrane; that stretch reads WGNKKLKQTFLSVLRQVRYWVKGEKPSSP.

The protein belongs to the G-protein coupled receptor T2R family.

Its subcellular location is the membrane. Functionally, receptor that may play a role in the perception of bitterness and is gustducin-linked. May play a role in sensing the chemical composition of the gastrointestinal content. The activity of this receptor may stimulate alpha gustducin, mediate PLC-beta-2 activation and lead to the gating of TRPM5. This chain is Taste receptor type 2 member 31 (TAS2R31), found in Pongo pygmaeus (Bornean orangutan).